A 157-amino-acid chain; its full sequence is Nuclear cap-binding protein subunit 2 (157 aa).

MRNA-binding positions include Tyr-17, Tyr-40, 109–113 (RADWD), 120–124 (RQYGR), and 130–131 (QV). Residues 37-115 (CTLYVGNLSY…RVIRADWDAG (79 aa)) enclose the RRM domain.

It belongs to the RRM NCBP2 family. As to quaternary structure, component of the nuclear cap-binding complex (CBC), a heterodimer composed of ncbp-1 and ncbp-2 that interacts with m7GpppG-capped RNA.

The protein resides in the nucleus. Its function is as follows. Component of the cap-binding complex (CBC), which binds co-transcriptionally to the 5' cap of pre-mRNAs and is involved in various processes such as pre-mRNA splicing and RNA-mediated gene silencing (RNAi). The CBC complex is involved in miRNA-mediated RNA interference and is required for primary microRNAs (miRNAs) processing. In the CBC complex, ncbp-2 recognizes and binds capped RNAs (m7GpppG-capped RNA) but requires ncbp-1 to stabilize the movement of its N-terminal loop and lock the CBC into a high affinity cap-binding state with the cap structure. This is Nuclear cap-binding protein subunit 2 (ncbp-2) from Caenorhabditis briggsae.